Consider the following 494-residue polypeptide: MFKFATAVILCLVAASSTLAQHNPHWWGNRNTIVHLFEWKWSDIAAECENFLGPRGFAGVQVSPVNENIVSAGRPWWERYQPISYKLTTRSGNEKEFADMVRRCNEVGVRIYVDVLLNHMSGDFDGIAVGTAGSEAEPSKKSYPGVPYSALDFHPSCEITDWNDRFQVQQCELVGLKDLDQSSEWVRSKLIEFLDHLIELGVAGFRVDAAKHMAADDLSFIYSSLSDLNIEHGFPHNARPFIFQEVIDHGHETVSREEYNQLGAVTEFRFSEGIGNAFRGNNALKWLQSWGTGWGFLPSGQALTFVDNHDNQRDMGAVLNYKSPKQYKMATAFHLAYPYGISRVMSSFAFDDHDTAPPQDEQEKIISPEFDEEGACVNGWICEHRWRQIYAMVGFKNAVRDTELSNWWDNGDSQISFCRGNKGFLAVNNNLYDLSQELQTCLPAGVYCDVISGSLVDGSCTGKSVTVDDNGYGYAHIGSDDFDGVLALHVDAKV.

Residues 1–20 (MFKFATAVILCLVAASSTLA) form the signal peptide. The residue at position 21 (Q21) is a Pyrrolidone carboxylic acid. Cysteines 48 and 104 form a disulfide. Residues N118, Q169, and D178 each coordinate Ca(2+). A disulfide bridge connects residues C157 and C171. R206 serves as a coordination point for chloride. The active-site Nucleophile is the D208. H212 is a binding site for Ca(2+). Residue E245 is the Proton donor of the active site. Chloride is bound by residues N308 and R343. Cystine bridges form between C376–C382, C418–C441, and C448–C460.

This sequence belongs to the glycosyl hydrolase 13 family. As to quaternary structure, monomer. It depends on Ca(2+) as a cofactor. Requires chloride as cofactor.

It localises to the secreted. The catalysed reaction is Endohydrolysis of (1-&gt;4)-alpha-D-glucosidic linkages in polysaccharides containing three or more (1-&gt;4)-alpha-linked D-glucose units.. The protein is Alpha-amylase-related protein (Amyrel) of Drosophila bipectinata (Fruit fly).